Consider the following 141-residue polypeptide: Putative pre-16S rRNA nuclease (141 aa).

This sequence belongs to the YqgF nuclease family.

Its subcellular location is the cytoplasm. Its function is as follows. Could be a nuclease involved in processing of the 5'-end of pre-16S rRNA. The sequence is that of Putative pre-16S rRNA nuclease from Coxiella burnetii (strain CbuG_Q212) (Coxiella burnetii (strain Q212)).